Consider the following 180-residue polypeptide: Large ribosomal subunit protein uL22 (180 aa).

The disordered stretch occupies residues 111–180 (VVVESRPAKD…ETSDAKGGSD (70 aa)). Positions 142 to 166 (PAKKAPAKKAPAKKAPAKTAAKKTP) are enriched in basic residues. Basic and acidic residues predominate over residues 171 to 180 (ETSDAKGGSD).

The protein belongs to the universal ribosomal protein uL22 family. Part of the 50S ribosomal subunit.

In terms of biological role, this protein binds specifically to 23S rRNA; its binding is stimulated by other ribosomal proteins, e.g. L4, L17, and L20. It is important during the early stages of 50S assembly. It makes multiple contacts with different domains of the 23S rRNA in the assembled 50S subunit and ribosome. Functionally, the globular domain of the protein is located near the polypeptide exit tunnel on the outside of the subunit, while an extended beta-hairpin is found that lines the wall of the exit tunnel in the center of the 70S ribosome. The protein is Large ribosomal subunit protein uL22 of Mycobacterium avium (strain 104).